We begin with the raw amino-acid sequence, 744 residues long: Collagen alpha-1(VIII) chain (744 aa).

The signal sequence occupies residues 1–27; the sequence is MAVPPGPPQLLQVLLTISLGSIRLIQA. The interval 29-117 is nonhelical region (NC2); sequence AYYGIKPLPP…GKEIPLASLR (89 aa). Positions 101–110 are enriched in basic and acidic residues; that stretch reads KEAVPKKGKE. Disordered regions lie at residues 101 to 435 and 478 to 584; these read KEAV…GLQG and LLGP…QGEY. Positions 118 to 571 are triple-helical region; that stretch reads GEQGPRGEPG…PGPPGPPGPP (454 aa). Pro residues predominate over residues 128–137; sequence PRGPPGPPGL. Over residues 168 to 190 the composition is skewed to low complexity; the sequence is KPGAMGMPGAKGEIGPKGEIGPM. A compositionally biased stretch (gly residues) spans 203–217; that stretch reads GLPGIGKPGGPGLPG. A compositionally biased stretch (pro residues) spans 288-298; the sequence is KPGPPGEPGPQ. Positions 328-337 are enriched in gly residues; it reads GFPGGKGEQG. Positions 389 to 403 are enriched in pro residues; sequence PGEPGLPGIPGPMGP. Over residues 411-420 the composition is skewed to gly residues; that stretch reads GPKGEGGIVG. 2 stretches are compositionally biased toward low complexity: residues 478 to 506 and 540 to 556; these read LLGP…TGPS and LHGP…QGQP. Residues 558–579 are compositionally biased toward pro residues; sequence LPGPPGPPGPPGPPAVMPPTPA. The nonhelical region (NC1) stretch occupies residues 572 to 744; that stretch reads AVMPPTPAPQ…SFSGYLLYPM (173 aa). The 134-residue stretch at 611-744 folds into the C1q domain; the sequence is PAYEMPAFTA…SFSGYLLYPM (134 aa).

Homotrimers, or heterotrimers in association with alpha 2(VIII) type collagens. Four homotrimers can form a tetrahedron stabilized by central interacting C-terminal NC1 trimers. Prolines at the third position of the tripeptide repeating unit (G-X-Y) are hydroxylated in some or all of the chains. Post-translationally, proteolytically cleaved by neutrophil elastase, in vitro. Proteolytic processing produces the C-terminal NC1 domain fragment, vastatin.

The protein resides in the secreted. The protein localises to the extracellular space. Its subcellular location is the extracellular matrix. It localises to the basement membrane. Its function is as follows. Macromolecular component of the subendothelium. Major component of the Descemet's membrane (basement membrane) of corneal endothelial cells. Also a component of the endothelia of blood vessels. Necessary for migration and proliferation of vascular smooth muscle cells and thus, has a potential role in the maintenance of vessel wall integrity and structure, in particular in atherogenesis. Vastatin, the C-terminal fragment comprising the NC1 domain, inhibits aortic endothelial cell proliferation and causes cell apoptosis. The chain is Collagen alpha-1(VIII) chain (COL8A1) from Oryctolagus cuniculus (Rabbit).